The primary structure comprises 193 residues: NADH-quinone oxidoreductase subunit B (193 aa).

[4Fe-4S] cluster is bound by residues Cys72, Cys73, Cys137, and Cys167.

This sequence belongs to the complex I 20 kDa subunit family. NDH-1 is composed of 14 different subunits. Subunits NuoB, C, D, E, F, and G constitute the peripheral sector of the complex. [4Fe-4S] cluster serves as cofactor.

It is found in the cell inner membrane. It catalyses the reaction a quinone + NADH + 5 H(+)(in) = a quinol + NAD(+) + 4 H(+)(out). In terms of biological role, NDH-1 shuttles electrons from NADH, via FMN and iron-sulfur (Fe-S) centers, to quinones in the respiratory chain. The immediate electron acceptor for the enzyme in this species is believed to be ubiquinone. Couples the redox reaction to proton translocation (for every two electrons transferred, four hydrogen ions are translocated across the cytoplasmic membrane), and thus conserves the redox energy in a proton gradient. The sequence is that of NADH-quinone oxidoreductase subunit B from Phenylobacterium zucineum (strain HLK1).